A 544-amino-acid polypeptide reads, in one-letter code: Zinc finger and SCAN domain-containing protein 25 (544 aa).

Residues lysine 3 and lysine 22 each participate in a glycyl lysine isopeptide (Lys-Gly) (interchain with G-Cter in SUMO2) cross-link. One can recognise an SCAN box domain in the interval 42–124 (RLRFRQFRYQ…AMVEDLTERA (83 aa)). Lysine 128 is covalently cross-linked (Glycyl lysine isopeptide (Lys-Gly) (interchain with G-Cter in SUMO2)). Positions 157 to 189 (VEVKPEWGMPPGEGVQGPDPGTEEQLSQDPGDE) are disordered. Residues lysine 278 and lysine 285 each participate in a glycyl lysine isopeptide (Lys-Gly) (interchain with G-Cter in SUMO2) cross-link. 6 C2H2-type zinc fingers span residues 348–370 (FQCP…QRTH), 375–397 (YGCV…QRTH), 403–425 (YVCS…QRSH), 431–453 (YKCG…RRTH), 459–480 (YTCE…RRAH), and 486–508 (YGCQ…QRIH). The C2H2-type 7; degenerate zinc-finger motif lies at 514–536 (YHCPACGRSFNQRSILNRHQKTQ).

This sequence belongs to the krueppel C2H2-type zinc-finger protein family.

The protein resides in the nucleus. In terms of biological role, may be involved in transcriptional regulation. This chain is Zinc finger and SCAN domain-containing protein 25 (ZSCAN25), found in Homo sapiens (Human).